A 100-amino-acid chain; its full sequence is Tetrahydromethanopterin S-methyltransferase subunit B (100 aa).

A helical membrane pass occupies residues 80 to 100 (KLTNIVYGFILGLIILFALLL).

Belongs to the MtrB family. The complex is composed of 8 subunits; MtrA, MtrB, MtrC, MtrD, MtrE, MtrF, MtrG and MtrH.

The protein resides in the cell membrane. It catalyses the reaction 5-methyl-5,6,7,8-tetrahydromethanopterin + coenzyme M + 2 Na(+)(in) = 5,6,7,8-tetrahydromethanopterin + methyl-coenzyme M + 2 Na(+)(out). It participates in one-carbon metabolism; methanogenesis from CO(2); methyl-coenzyme M from 5,10-methylene-5,6,7,8-tetrahydromethanopterin: step 2/2. Part of a complex that catalyzes the formation of methyl-coenzyme M and tetrahydromethanopterin from coenzyme M and methyl-tetrahydromethanopterin. This is an energy-conserving, sodium-ion translocating step. The sequence is that of Tetrahydromethanopterin S-methyltransferase subunit B from Methanothermobacter marburgensis (strain ATCC BAA-927 / DSM 2133 / JCM 14651 / NBRC 100331 / OCM 82 / Marburg) (Methanobacterium thermoautotrophicum).